The chain runs to 102 residues: uncharacterized protein (102 aa).

Positions 79 to 102 (AELLHPSPAPMPPATHGRSAAPCS) are disordered.

This is an uncharacterized protein from Homo sapiens (Human).